The sequence spans 117 residues: uncharacterized protein (117 aa).

Positions 1-12 (MAQNSVSLSAGD) are enriched in polar residues. Disordered regions lie at residues 1-30 (MAQN…NPSA) and 43-87 (VTRL…SPYP).

This is an uncharacterized protein from Mus musculus (Mouse).